A 1118-amino-acid chain; its full sequence is MPQLLNSILNVSKVFQDYAEYHGVGASLSKKELKQLLLTEFGDILRRPNDPETVETILEHLDRDRNGYVDFHEYLLLVFQLVQACHHKLDSKFYGSRTSSQKEHDQEGTRSHKFSESTGRQHRQRYEGERRNSHHNQSEGQHQNVQHDQSQRQDKDSERHDTDPHCGQSETFHGDSHYGHSERQDTDYSSDQSESDNESSSSSQRLGYKSSHEQPKGQGYVFALSQSKNPEQAFHYGQSKTSGQQSSHGQSGRFRKDSYSSQTSQQESDSYEQYGSQHQKSGNSQTERQGQNSQYGQTNKKGHSSYHEQTEGQGQSFHYGQKGRKDQSFQQGQKGRKDQSPHLGQKGRQDQSPHRGQKGRQDQSPHQGQKGRQDQSPHRGQKGRQDQSPHQGQKGRQDQSPHLGQKGRQDQSPHQGQKGRQDQSPHQGQKGRQDQSSHQGQKGRQDQSSHQGQKGRQDQSSHQGQKGRQDQSSHQGQREGQDQNSQWHRTDSQGQSFHYGQTGGHSLSSHQGQTDSQGQNSNWHRTDSQGQSFHYGQTGGQGLSSHQGQTDSQGQNSNWHRTDSQGQSFHFDQAGREVQGSHHGQTDRQSQNSNWHRTDSQGQSFHFDQAGKEVQGSHQGQTDSQGQSSHWHQTDRQGQSSQQGHKDRQGQNTHQGQKGRQDLSPHQGQKGRQDQSPHLGQKGRHDQSPHQGQKGRHDQSPHQGQKGRQDLSSHQGQKGRQDQSPHLGQKGRHDQSPHRGQKGRQDQSPHQGQKGRQDQSSHQGQREGQDQNSHWHRTDRQGQSFHYGQTGGQGLSSHQGQTDSQGQNSQWHRTDSQGQSFHFDQAGREGQSSHHGQTDRQSQSSHCGQSEIGKTENQGQNRHSLGTDRTRRDSYVEQSGRSVKLSQQNSREEVRQTQSQRSHDRREQQIQQQTWKPKEDNQHKLLAQVQQEPYSYEEYDWQSQSSEQDHCGEEEYQDWDRHSVEDQENLYEMQNWQTHEEEQSHQTSDRQTHVDEQNQQRQHRQTHEENHDHQHGRHHEDEHNHRRQDHHQQRERQTHEEKEKYQGGQDQSRSFPNREKSHMSEDDQCEGPQGRRFHPTHGGGKSQRREKSGNHPTKPANYSSPLYDYVQEQAAYQY.

The interval 1-91 (MPQLLNSILN…VQACHHKLDS (91 aa)) is S-100-like. EF-hand domains follow at residues 13–48 (KVFQ…LRRP) and 49–84 (NDPE…LVQA). Ca(2+) contacts are provided by S27, E32, D62, D64, N66, Y68, and E73. Residues 94–1118 (YGSRTSSQKE…YVQEQAAYQY (1025 aa)) are disordered. Residues 100 to 115 (SQKEHDQEGTRSHKFS) show a composition bias toward basic and acidic residues. Polar residues predominate over residues 138-148 (SEGQHQNVQHD). Basic and acidic residues-rich tracts occupy residues 149-164 (QSQR…DTDP) and 172-186 (FHGD…RQDT). Over residues 237–252 (GQSKTSGQQSSHGQSG) the composition is skewed to low complexity. The span at 259-299 (YSSQTSQQESDSYEQYGSQHQKSGNSQTERQGQNSQYGQTN) shows a compositional bias: polar residues. Repeat copies occupy residues 273 to 284 (QYGSQHQKSGNS), 285 to 296 (QTERQGQNSQYG), 297 to 308 (QTNKKGHSSYHE), 309 to 320 (QTEGQGQSFHYG), 321 to 332 (QKGRKDQSFQQG), 333 to 344 (QKGRKDQSPHLG), 345 to 356 (QKGRQDQSPHRG), 357 to 368 (QKGRQDQSPHQG), 369 to 380 (QKGRQDQSPHRG), 381 to 392 (QKGRQDQSPHQG), 393 to 404 (QKGRQDQSPHLG), 405 to 416 (QKGRQDQSPHQG), 417 to 428 (QKGRQDQSPHQG), 429 to 440 (QKGRQDQSSHQG), 441 to 452 (QKGRQDQSSHQG), 453 to 464 (QKGRQDQSSHQG), 465 to 476 (QKGRQDQSSHQG), 477 to 488 (QREGQDQNSQWH), 489 to 500 (RTDSQGQSFHYG), 501 to 512 (QTGGHSLSSHQG), 513 to 524 (QTDSQGQNSNWH), 525 to 536 (RTDSQGQSFHYG), 537 to 548 (QTGGQGLSSHQG), 549 to 560 (QTDSQGQNSNWH), 561 to 572 (RTDSQGQSFHFD), 573 to 584 (QAGREVQGSHHG), 585 to 596 (QTDRQSQNSNWH), 597 to 608 (RTDSQGQSFHFD), 609 to 620 (QAGKEVQGSHQG), 621 to 632 (QTDSQGQSSHWH), 633 to 644 (QTDRQGQSSQQG), 645 to 656 (HKDRQGQNTHQG), 657 to 668 (QKGRQDLSPHQG), 669 to 680 (QKGRQDQSPHLG), 681 to 692 (QKGRHDQSPHQG), 693 to 704 (QKGRHDQSPHQG), 705 to 716 (QKGRQDLSSHQG), 717 to 728 (QKGRQDQSPHLG), 729 to 740 (QKGRHDQSPHRG), 741 to 752 (QKGRQDQSPHQG), 753 to 764 (QKGRQDQSSHQG), 765 to 776 (QREGQDQNSHWH), 777 to 788 (RTDRQGQSFHYG), 789 to 800 (QTGGQGLSSHQG), 801 to 812 (QTDSQGQNSQWH), 813 to 824 (RTDSQGQSFHFD), 825 to 836 (QAGREGQSSHHG), and 837 to 848 (QTDRQSQSSHCG). The tract at residues 273–848 (QYGSQHQKSG…DRQSQSSHCG (576 aa)) is 48 X 12 AA approximate tandem repeats of Q-[KT]-[GD]-[RS]-Q-[DG]-Q-S-[PS]-H-X-G. The tract at residues 321–764 (QKGRKDQSFQ…GRQDQSSHQG (444 aa)) is 22 X 12 AA approximate tandem repeats of Q-K-G-R-Q-D-Q-S-P-H-Q-G. Composition is skewed to basic and acidic residues over residues 347-363 (GRQD…RQDQ) and 371-387 (GRQD…RQDQ). Positions 434–466 (DQSSHQGQKGRQDQSSHQGQKGRQDQSSHQGQK) are enriched in polar residues. Over residues 467–481 (GRQDQSSHQGQREGQ) the composition is skewed to basic and acidic residues. Polar residues-rich tracts occupy residues 482–535 (DQNS…SFHY) and 543–570 (LSSH…QSFH). Composition is skewed to polar residues over residues 587 to 606 (DRQS…QSFH) and 616 to 643 (GSHQ…SSQQ). Polar residues predominate over residues 710–726 (DLSSHQGQKGRQDQSPH). Basic and acidic residues-rich tracts occupy residues 731–747 (GRHD…RQDQ) and 755–769 (GRQD…REGQ). 3 stretches are compositionally biased toward polar residues: residues 795 to 822 (LSSH…QSFH), 833 to 848 (SHHG…SHCG), and 855 to 864 (TENQGQNRHS). Basic and acidic residues predominate over residues 865–875 (LGTDRTRRDSY). Residues 876–889 (VEQSGRSVKLSQQN) show a composition bias toward polar residues. Basic and acidic residues-rich tracts occupy residues 890 to 908 (SREE…RREQ), 947 to 965 (EQDH…HSVE), 978 to 998 (THEE…DEQN), 1005 to 1045 (QTHE…KEKY), and 1056 to 1065 (PNREKSHMSE).

It belongs to the S100-fused protein family. Potential substrate of transglutaminase. Some arginines are probably converted to citrullines by peptidylarginine deimidase. As to expression, detectable in the stratified internal epithelia of forestomach and tongue and to a lesser degree in normal skin epidermis, where it is restricted to the differentiated suprabasal cell layers. Overexpressed in skin tumors.

Its subcellular location is the secreted. It localises to the extracellular space. The protein resides in the extracellular matrix. In terms of biological role, involved in the cornified cell envelope formation. Multifunctional epidermal matrix protein. The chain is Repetin (Rptn) from Mus musculus (Mouse).